The primary structure comprises 373 residues: Zinc finger protein CONSTANS-LIKE 10 (373 aa).

The Zn(2+) site is built by Cys-5, Cys-8, Cys-28, His-33, Cys-48, Cys-51, Cys-71, and His-76. The segment at 5 to 47 adopts a B box-type 1; atypical zinc-finger fold; the sequence is CDFCGEQRSMVYCRSDAACLCLSCDRNVHSANALSKRHSRTLV. The B box-type 2; atypical zinc-finger motif lies at 48-92; the sequence is CERCNAQPASVRCSDERVSLCQNCDWSGHDGKNSTTTSHHKRQTI. Residues 152-172 form a disordered region; the sequence is PETSSAAQGMDHSSVPENSSM. The 43-residue stretch at 316–358 folds into the CCT domain; that stretch reads RNNAVMRYKEKKKARKFDKRVRYVSRKERADVRRRVKGRFVKS.

The protein belongs to the CONSTANS family.

The protein localises to the nucleus. The chain is Zinc finger protein CONSTANS-LIKE 10 (COL10) from Arabidopsis thaliana (Mouse-ear cress).